A 162-amino-acid polypeptide reads, in one-letter code: EF-hand calcium-binding domain-containing protein 11 (162 aa).

EF-hand domains are found at residues 18 to 53, 91 to 126, and 127 to 162; these read SERRKWVKVFKACDEDNKGYLSREDFKVAIVMLFGY, LYRNEIRQIFTAFDVHYRGFLTLEDFKRAFSRVAPK, and LPARTVLEVFREADQDSDGHVSFRDFEYAMNHGQSK. D140, D142, D144, H146, and D151 together coordinate Ca(2+).

This chain is EF-hand calcium-binding domain-containing protein 11 (Efcab11), found in Mus musculus (Mouse).